The chain runs to 46 residues: Protein PsbN (46 aa).

The chain crosses the membrane as a helical span at residues 10-30 (VAIAVLAALLGLTGFGVYTAF).

It belongs to the PsbN family.

The protein localises to the cellular thylakoid membrane. May play a role in photosystem I and II biogenesis. The chain is Protein PsbN from Synechococcus sp. (strain CC9311).